The chain runs to 390 residues: Deoxyhypusine synthase-like protein (390 aa).

Belongs to the deoxyhypusine synthase family.

The polypeptide is Deoxyhypusine synthase-like protein (Nostoc punctiforme (strain ATCC 29133 / PCC 73102)).